A 705-amino-acid chain; its full sequence is GATOR2 complex protein WDR24 (705 aa).

WD repeat units lie at residues 1–28 (MDENLLATAATNGVVVTWNLGKPSRNKQ), 34–74 (EHKR…SVST), 77–117 (GQSE…RYER), 121–161 (AHNG…AKEI), 165–207 (QTIA…IPSA), and 211–254 (EHKD…IDRA). The C4-type zinc finger occupies 633–655 (NCSNCKRPMSNRGWICDRCRQCA). Residues Cys-634, Cys-637, Cys-648, Cys-651, Cys-658, Cys-661, Cys-672, Cys-675, His-677, His-680, His-683, Cys-694, Cys-698, His-700, and Cys-702 each contribute to the Zn(2+) site. The RING-type; atypical zinc-finger motif lies at 656–705 (SMCAVCHHVVKGLFVWCQGCSHGGHLQHIMKWLETSSHCPAGCGHLCEYT).

It belongs to the WD repeat WDR24 family. In terms of assembly, component of the GATOR2 subcomplex, composed of MIOS, SEC13, SEH1L, WDR24 and WDR59. The GATOR2 complex interacts with CASTOR1 and CASTOR2; the interaction is negatively regulated by arginine. The GATOR2 complex interacts with SESN1, SESN2 and SESN3; the interaction is negatively regulated by amino acids.

Its subcellular location is the lysosome membrane. It catalyses the reaction S-ubiquitinyl-[E2 ubiquitin-conjugating enzyme]-L-cysteine + [acceptor protein]-L-lysine = [E2 ubiquitin-conjugating enzyme]-L-cysteine + N(6)-ubiquitinyl-[acceptor protein]-L-lysine.. It participates in protein modification; protein ubiquitination. The GATOR2 complex is negatively regulated by the upstream amino acid sensors CASTOR1 and SESN2, which sequester the GATOR2 complex in absence of amino acids. In the presence of abundant amino acids, GATOR2 is released from CASTOR1 and SESN2 and activated. Its function is as follows. Catalytic component of the GATOR2 complex, a multiprotein complex that acts as an activator of the amino acid-sensing branch of the mTORC1 signaling pathway. The GATOR2 complex indirectly activates mTORC1 through the inhibition of the GATOR1 subcomplex. GATOR2 probably acts as an E3 ubiquitin-protein ligase toward GATOR1. In the presence of abundant amino acids, the GATOR2 complex mediates ubiquitination of the NPRL2 core component of the GATOR1 complex, leading to GATOR1 inactivation. In the absence of amino acids, GATOR2 is inhibited, activating the GATOR1 complex. In addition to its role in regulation of the mTORC1 complex, promotes the acidification of lysosomes and facilitates autophagic flux. Within the GATOR2 complex, WDR24 constitutes the catalytic subunit that mediates 'Lys-6'-linked ubiquitination of NPRL2. The sequence is that of GATOR2 complex protein WDR24 from Gallus gallus (Chicken).